Consider the following 378-residue polypeptide: Cytochrome P450 2C15 (378 aa).

Cysteine 323 is a binding site for heme.

This sequence belongs to the cytochrome P450 family. Requires heme as cofactor.

The protein resides in the endoplasmic reticulum membrane. The protein localises to the microsome membrane. The catalysed reaction is an organic molecule + reduced [NADPH--hemoprotein reductase] + O2 = an alcohol + oxidized [NADPH--hemoprotein reductase] + H2O + H(+). Functionally, cytochromes P450 are a group of heme-thiolate monooxygenases. In liver microsomes, this enzyme is involved in an NADPH-dependent electron transport pathway. It oxidizes a variety of structurally unrelated compounds, including steroids, fatty acids, and xenobiotics. The protein is Cytochrome P450 2C15 (CYP2C15) of Oryctolagus cuniculus (Rabbit).